The chain runs to 374 residues: 4-galactosyl-N-acetylglucosaminide 3-alpha-L-fucosyltransferase FUT5 (374 aa).

At 1–15 (MDPLGPAKPQWLWRR) the chain is on the cytoplasmic side. Residues 16–34 (CLAGLLFQLLVAVCFFSYL) form a helical; Signal-anchor for type II membrane protein membrane-spanning segment. Over 35 to 374 (RVSQDHATGS…TVRSIAAWFT (340 aa)) the chain is Lumenal. 4 N-linked (GlcNAc...) asparagine glycosylation sites follow: asparagine 60, asparagine 105, asparagine 167, and asparagine 198.

The protein belongs to the glycosyltransferase 10 family.

It is found in the golgi apparatus. Its subcellular location is the golgi stack membrane. It carries out the reaction a beta-D-galactosyl-(1-&gt;3)-N-acetyl-beta-D-glucosaminyl derivative + GDP-beta-L-fucose = a beta-D-galactosyl-(1-&gt;3)-[alpha-L-fucosyl-(1-&gt;4)]-N-acetyl-beta-D-glucosaminyl derivative + GDP + H(+). The catalysed reaction is an N-acetyl-alpha-neuraminyl-(2-&gt;3)-beta-D-galactosyl-(1-&gt;4)-N-acetyl-beta-D-glucosaminyl derivative + GDP-beta-L-fucose = an alpha-Neu5Ac-(2-&gt;3)-beta-D-Gal-(1-&gt;4)-[alpha-L-Fuc-(1-&gt;3)]-beta-D-GlcNAc derivative + GDP + H(+). It catalyses the reaction an alpha-Neu5Ac-(2-&gt;3)-beta-D-Gal-(1-&gt;4)-beta-D-GlcNAc-(1-&gt;3)-beta-D-Gal-(1-&gt;4)-[alpha-L-Fuc-(1-&gt;3)]-beta-D-GlcNAc derivative + GDP-beta-L-fucose = an alpha-Neu5Ac-(2-&gt;3)-beta-D-Gal-(1-&gt;4)-[alpha-L-Fuc-(1-&gt;3)]-beta-D-GlcNAc-(1-&gt;3)-beta-D-Gal-(1-&gt;4)-[alpha-L-Fuc-(1-&gt;3)]-beta-D-GlcNAc derivative + GDP + H(+). The enzyme catalyses a beta-D-galactosyl-(1-&gt;4)-N-acetyl-beta-D-glucosaminyl derivative + GDP-beta-L-fucose = a beta-D-galactosyl-(1-&gt;4)-[alpha-L-fucosyl-(1-&gt;3)]-N-acetyl-beta-D-glucosaminyl derivative + GDP + H(+). It carries out the reaction a neolactoside nLc4Cer + GDP-beta-L-fucose = a neolactoside III(3)-alpha-Fuc-nLc4Cer + GDP + H(+). The catalysed reaction is a neolactoside nLc6Cer + GDP-beta-L-fucose = beta-D-galactosyl-(1-&gt;4)-N-acetyl-beta-D-glucosaminyl-(1-&gt;3)-beta-D-galactosyl-(1-&gt;4)-[alpha-L-fucosyl-(1-&gt;3)]-N-acetyl-beta-D-glucosaminyl-(1-&gt;3)-beta-D-galactosyl-(1-&gt;4)-beta-D-glucosyl-(1&lt;-&gt;1')-ceramide + GDP + H(+). It catalyses the reaction a neolactoside nLc6Cer(d18:1(4E)) + GDP-beta-L-fucose = a neolactoside III(3)-alpha-Fuc-nLc6Cer(d18:1(4E)) + GDP + H(+). The enzyme catalyses a neolactoside nLc4Cer(d18:1(4E)) + GDP-beta-L-fucose = a neolactoside III(3)-alpha-Fuc-nLc4Cer(d18:1(4E)) + GDP + H(+). It carries out the reaction a neolactoside VI(3)-alpha-NeuNAc-nLc6Cer + GDP-beta-L-fucose = a neolactoside VI(3)-alpha-NeuAc,III(3)-alphaFuc-nLc6Cer + GDP + H(+). The catalysed reaction is beta-D-galactosyl-(1-&gt;4)-N-acetyl-D-glucosamine + GDP-beta-L-fucose = beta-D-galactosyl-(1-&gt;4)-[alpha-L-fucosyl-(1-&gt;3)]-N-acetyl-D-glucosamine + GDP + H(+). It catalyses the reaction N-acetyl-alpha-neuraminosyl-(2-&gt;3)-beta-D-galactosyl-(1-&gt;4)-N-acetyl-beta-D-glucosamine + GDP-beta-L-fucose = N-acetyl-alpha-neuraminosyl-(2-&gt;3)-beta-D-galactosyl-(1-&gt;4)-[alpha-L-fucosyl-(1-&gt;3)]-N-acetyl-beta-D-glucosamine + GDP + H(+). The enzyme catalyses alpha-L-Fuc-(1-&gt;2)-beta-D-Gal-(1-&gt;4)-D-GlcNAc + GDP-beta-L-fucose = alpha-L-Fuc-(1-&gt;2)-beta-D-Gal-(1-&gt;4)-[alpha-L-Fuc-(1-&gt;3)]-D-GlcNAc + GDP + H(+). It carries out the reaction an alpha-Neu5Ac-(2-&gt;3)-beta-D-Gal-(1-&gt;3)-D-GlcNAc derivative + GDP-beta-L-fucose = an alpha-Neu5Ac-(2-&gt;3)-beta-D-Gal-(1-&gt;3)-[alpha-L-Fuc-(1-&gt;4)]-beta-D-GlcNAc derivative + GDP + H(+). It functions in the pathway protein modification; protein glycosylation. In terms of biological role, catalyzes preferentially the transfer of L-fucose, from a guanosine diphosphate-beta-L-fucose, to the N-acetyl-beta-D-glucosamine (GlcNAc) of an N-acetyllactosamine unit (type 2 chain) of an oligosaccharide, or a glycoprotein- and a glycolipid-linked N-acetyllactosamine unit via an alpha (1,3) linkage and participates in the surface expression of VIM-2, Lewis X/SSEA-1 and sialyl Lewis X antigens. Preferentially transfers fucose to the GlcNAc of an internal N-acetyllactosamine unit of a poly-N-acetyllactosamine chain acceptor substrate. Also catalyzes to a lesser extend the transfer of L-fucose to the GlcNAc of a type 1 (beta-D-galactosyl-(1-&gt;3)-N-acetyl-beta-D-glucosaminyl) or H-type 1 (alpha-L-Fuc-(1-&gt;2)-beta-D-Gal-(1-&gt;3)-D-GlcNAc) chain oligosaccharide via an alpha (1,4) linkage. Preferentially catalyzes sialylated type 2 oligosaccharide acceptors over neutral type 2 or H type 2 (alpha-L-Fuc-(1-&gt;2)-beta-D-Gal-(1-&gt;4)-D-GlcNAc) oligosaccharide acceptors. Lactose-based structures are also acceptor substrates. In Gorilla gorilla gorilla (Western lowland gorilla), this protein is 4-galactosyl-N-acetylglucosaminide 3-alpha-L-fucosyltransferase FUT5.